Here is a 114-residue protein sequence, read N- to C-terminus: Cyclin-dependent kinase 2-associated protein 1 (114 aa).

Positions 18–57 are disordered; it reads AGSVHSPSTSMATSSQYRQLLSDYGPPSLGYTQGTGNSQV. The interval 19–24 is interaction with CDK2AP2; sequence GSVHSP. Polar residues predominate over residues 20–36; sequence SVHSPSTSMATSSQYRQ. Phosphoserine; by IKKE is present on S45. The segment covering 47 to 57 has biased composition (polar residues); the sequence is GYTQGTGNSQV.

This sequence belongs to the CDK2AP family. Homodimer. Component of the nucleosome remodeling and deacetylase (NuRD) repressor complex, composed of core proteins MTA1, MTA2, MTA3, RBBP4, RBBP7, HDAC1, HDAC2, MBD2, MBD3, and peripherally associated proteins CDK2AP1, CDK2AP2, GATAD2A, GATAD2B, CHD3, CHD4 and CHD5. The exact stoichiometry of the NuRD complex is unknown, and some subunits such as MBD2 and MBD3, GATAD2A and GATAD2B, and CHD3, CHD4 and CHD5 define mutually exclusive NuRD complexes. Interacts with monomeric unphosphorylated CDK2. Interacts with CDK2AP2. Interacts with GATAD2A. Interacts with HDAC1. Interacts with HDAC2. Interacts with MBD2. Interacts with MBD3. Interacts with RBBP4. Interacts with RBBP7. Post-translationally, phosphorylated in vitro by IKBKE at Ser-45.

Its subcellular location is the nucleus. The protein localises to the chromosome. In terms of biological role, inhibitor of cyclin-dependent kinase CDK2. Also acts as a component of the histone deacetylase NuRD complex which participates in the remodeling of chromatin. The chain is Cyclin-dependent kinase 2-associated protein 1 (Cdk2ap1) from Mus musculus (Mouse).